The primary structure comprises 75 residues: Small integral membrane protein 7 (75 aa).

The first 17 residues, 1–17 (MIGDILLFGTLLMNAGA), serve as a signal peptide directing secretion. The Extracellular portion of the chain corresponds to 18–53 (VLNFKLKKKDTQGFGEESREPSTGDNIREFLLSLRY). A helical membrane pass occupies residues 54–74 (FRIFIALWNIFMMFCMIVLFG). Position 75 (S75) is a topological domain, cytoplasmic.

Belongs to the SMIM7 family.

Its subcellular location is the membrane. The polypeptide is Small integral membrane protein 7 (SMIM7) (Homo sapiens (Human)).